The primary structure comprises 325 residues: UPF0285 protein MmarC7_1666 (325 aa).

The protein belongs to the UPF0285 family.

This is UPF0285 protein MmarC7_1666 from Methanococcus maripaludis (strain C7 / ATCC BAA-1331).